The chain runs to 233 residues: Sugar fermentation stimulation protein homolog (233 aa).

It belongs to the SfsA family.

This chain is Sugar fermentation stimulation protein homolog, found in Teredinibacter turnerae (strain ATCC 39867 / T7901).